Reading from the N-terminus, the 70-residue chain is Large ribosomal subunit protein eL38 (70 aa).

It belongs to the eukaryotic ribosomal protein eL38 family.

This is Large ribosomal subunit protein eL38 (RpL38) from Spodoptera frugiperda (Fall armyworm).